The primary structure comprises 326 residues: Negative regulator of the PHO system (326 aa).

In terms of domain architecture, Protein kinase spans 8–290; sequence FQQLEKLGEG…ARQALQHPWF (283 aa). Residues 14–22 and lysine 37 contribute to the ATP site; that span reads LGEGTYATV. Aspartate 131 serves as the catalytic Proton acceptor. The segment at 300–326 is disordered; the sequence is PQHLSDPYQQQQQQQQHPHQPIIDQQY. Low complexity predominate over residues 305–326; it reads DPYQQQQQQQQHPHQPIIDQQY.

Belongs to the protein kinase superfamily. CMGC Ser/Thr protein kinase family. CDC2/CDKX subfamily. Interacts with a number of cyclins.

It catalyses the reaction L-seryl-[protein] + ATP = O-phospho-L-seryl-[protein] + ADP + H(+). It carries out the reaction L-threonyl-[protein] + ATP = O-phospho-L-threonyl-[protein] + ADP + H(+). Functionally, when phosphate concentrations are high it phosphorylates the PHO4 transcription factor thus establishing repression. This Candida albicans (Yeast) protein is Negative regulator of the PHO system (PHO85).